Reading from the N-terminus, the 117-residue chain is Huntingtin-interacting protein M (117 aa).

Disordered regions lie at residues 1-30 (MSEKKNCKNSSTNNNQTQDPSRNELQVPRS) and 71-117 (EASN…RKND). Residues 72–81 (ASNNGSMRNT) show a composition bias toward polar residues. Residues 82-117 (SQDREREVDNNREPHSAESDVTRFLFDEMPKSRKND) are compositionally biased toward basic and acidic residues.

As to quaternary structure, may interact with the N-terminus of HD.

The polypeptide is Huntingtin-interacting protein M (Homo sapiens (Human)).